A 239-amino-acid polypeptide reads, in one-letter code: Orotidine 5'-phosphate decarboxylase (239 aa).

Residues Asp-15, Lys-37, 64–73, Thr-126, Arg-187, Gln-196, Gly-216, and Arg-217 each bind substrate; that span reads DLKFHDIPNT. The active-site Proton donor is Lys-66.

The protein belongs to the OMP decarboxylase family. Type 1 subfamily. Homodimer.

The enzyme catalyses orotidine 5'-phosphate + H(+) = UMP + CO2. It functions in the pathway pyrimidine metabolism; UMP biosynthesis via de novo pathway; UMP from orotate: step 2/2. Functionally, catalyzes the decarboxylation of orotidine 5'-monophosphate (OMP) to uridine 5'-monophosphate (UMP). The chain is Orotidine 5'-phosphate decarboxylase from Geobacter metallireducens (strain ATCC 53774 / DSM 7210 / GS-15).